Here is a 162-residue protein sequence, read N- to C-terminus: Sorting nexin-12 (162 aa).

The segment at 1 to 20 is disordered; sequence MSDTAVADTRRLNSKPQDLT. The residue at position 2 (Ser2) is an N-acetylserine. Tyr23 carries the post-translational modification Phosphotyrosine. A PX domain is found at 28 to 152; that stretch reads NFLEIDIFNP…HMFLQEEAID (125 aa). The a 1,2-diacyl-sn-glycero-3-phospho-(1D-myo-inositol-3-phosphate) site is built by Arg71, Ser73, Lys96, and Arg119. Ser73 carries the phosphoserine modification.

This sequence belongs to the sorting nexin family.

It is found in the membrane. In terms of biological role, may be involved in several stages of intracellular trafficking. The polypeptide is Sorting nexin-12 (SNX12) (Homo sapiens (Human)).